A 138-amino-acid chain; its full sequence is MRALWIVAVLLVGVEGSLVEFETLIMKIAGRSGISYYSSYGCYCGAGGQGWPQDASDRCCFEHDCCYAKLTGCDPTTDVYTYRQEDGEIVCGGDDPCGTQICECDKAAAICFRDSMNTYDYKYLRFSPENCQGESQPC.

The N-terminal stretch at 1–40 (MRALWIVAVLLVGVEGSLVEFETLIMKIAGRSGISYYSSY) is a signal peptide. 7 disulfides stabilise this stretch: Cys-42–Cys-131, Cys-44–Cys-60, Cys-59–Cys-111, Cys-65–Cys-138, Cys-66–Cys-104, Cys-73–Cys-97, and Cys-91–Cys-102. The propeptide occupies 81-83 (TYR). At Gln-84 the chain carries Pyrrolidone carboxylic acid. The propeptide occupies 120–126 (DYKYLRF).

It belongs to the phospholipase A2 family. Group II subfamily. D49 sub-subfamily. As to quaternary structure, heterodimer of an acidic and a basic chain. The acidic subunit is non-toxic, without enzymatic activity and comprises 3 peptides that are cross-linked by 5 disulfide bridges. The basic subunit is toxic, has phospholipase A2 activity and is composed of a single chain. It depends on Ca(2+) as a cofactor. In terms of tissue distribution, expressed by the venom gland.

The protein localises to the secreted. Functionally, snake venom phospholipase A2 (PLA2) that inhibits neuromuscular transmission by blocking acetylcholine release from the nerve termini. The chain is Phospholipase A2 homolog mojave toxin acidic chain from Crotalus scutulatus scutulatus (Mojave rattlesnake).